The sequence spans 1134 residues: Protocadherin-18 (1134 aa).

An N-terminal signal peptide occupies residues Met1 to Gly27. 6 Cadherin domains span residues Lys28–Phe137, Ser138–Phe246, Glu247–Ile354, Pro361–Phe465, Gln466–Val576, and Arg582–Asp697. The Extracellular portion of the chain corresponds to Lys28–Ser699. An N-linked (GlcNAc...) asparagine glycan is attached at Asn103. Asn269 carries an N-linked (GlcNAc...) asparagine glycan. Asn559 carries N-linked (GlcNAc...) asparagine glycosylation. A helical membrane pass occupies residues Met700 to Phe720. The Cytoplasmic segment spans residues Ala721–Ser1134. 3 disordered regions span residues Thr768–Gln800, Ser868–Arg888, and Asp941–Leu1003. A compositionally biased stretch (polar residues) spans Gly791–Gln800. Residues Ser868–Ser877 are compositionally biased toward basic and acidic residues. The tract at residues Ile892 to Ser1134 is interaction with DAB1.

As to quaternary structure, interacts with DAB1.

It localises to the cell membrane. Functionally, potential calcium-dependent cell-adhesion protein. This is Protocadherin-18 (PCDH18) from Bos taurus (Bovine).